The following is a 641-amino-acid chain: Chaperone protein HtpG (641 aa).

The interval 1-348 (MTTATEKQTL…SNDLSLNVSR (348 aa)) is a; substrate-binding. A b region spans residues 349-565 (EILQNDKAVE…AYDMGVQMRR (217 aa)). The segment at 566–641 (IMEAAGQALP…KLLLELSNAG (76 aa)) is c.

The protein belongs to the heat shock protein 90 family. Homodimer.

It localises to the cytoplasm. Functionally, molecular chaperone. Has ATPase activity. The protein is Chaperone protein HtpG of Hahella chejuensis (strain KCTC 2396).